The chain runs to 365 residues: Chorismate synthase (365 aa).

Arg48 and Arg54 together coordinate NADP(+). FMN contacts are provided by residues 131-133 (RSS), 243-244 (NA), Gly288, 303-307 (KPTSS), and Arg329.

The protein belongs to the chorismate synthase family. As to quaternary structure, homotetramer. FMNH2 serves as cofactor.

It carries out the reaction 5-O-(1-carboxyvinyl)-3-phosphoshikimate = chorismate + phosphate. Its pathway is metabolic intermediate biosynthesis; chorismate biosynthesis; chorismate from D-erythrose 4-phosphate and phosphoenolpyruvate: step 7/7. Catalyzes the anti-1,4-elimination of the C-3 phosphate and the C-6 proR hydrogen from 5-enolpyruvylshikimate-3-phosphate (EPSP) to yield chorismate, which is the branch point compound that serves as the starting substrate for the three terminal pathways of aromatic amino acid biosynthesis. This reaction introduces a second double bond into the aromatic ring system. The polypeptide is Chorismate synthase (Rhizobium etli (strain CIAT 652)).